The primary structure comprises 73 residues: Translation initiation factor IF-1 (73 aa).

One can recognise an S1-like domain in the interval 1–73 (MPKKEGVIEI…TRGRIVYRYK (73 aa)).

This sequence belongs to the IF-1 family. Component of the 30S ribosomal translation pre-initiation complex which assembles on the 30S ribosome in the order IF-2 and IF-3, IF-1 and N-formylmethionyl-tRNA(fMet); mRNA recruitment can occur at any time during PIC assembly.

It localises to the cytoplasm. One of the essential components for the initiation of protein synthesis. Stabilizes the binding of IF-2 and IF-3 on the 30S subunit to which N-formylmethionyl-tRNA(fMet) subsequently binds. Helps modulate mRNA selection, yielding the 30S pre-initiation complex (PIC). Upon addition of the 50S ribosomal subunit IF-1, IF-2 and IF-3 are released leaving the mature 70S translation initiation complex. The sequence is that of Translation initiation factor IF-1 from Nocardioides sp. (strain ATCC BAA-499 / JS614).